Consider the following 284-residue polypeptide: Tryptophan 2,3-dioxygenase (284 aa).

Substrate-binding positions include 53–57 (FIIQH) and Arg-119. His-242 contacts heme. Thr-256 contacts substrate.

It belongs to the tryptophan 2,3-dioxygenase family. In terms of assembly, homotetramer. Heme is required as a cofactor.

It carries out the reaction L-tryptophan + O2 = N-formyl-L-kynurenine. It functions in the pathway amino-acid degradation; L-tryptophan degradation via kynurenine pathway; L-kynurenine from L-tryptophan: step 1/2. The protein operates within siderophore biosynthesis; quinolobactin biosynthesis. Functionally, heme-dependent dioxygenase that catalyzes the oxidative cleavage of the L-tryptophan (L-Trp) pyrrole ring and converts L-tryptophan to N-formyl-L-kynurenine. Catalyzes the oxidative cleavage of the indole moiety. Required for synthesis of the siderophore quinolobactin. The protein is Tryptophan 2,3-dioxygenase of Pseudomonas fluorescens.